The sequence spans 1567 residues: Transmembrane protein 131 homolog (1567 aa).

An N-terminal signal peptide occupies residues 1–32 (MPTQVQMRPLLRIFAEPILLILIFLFTLGAKG). Over 33–1049 (EKVLQETFLG…RPGWESSLKN (1017 aa)) the chain is Lumenal. The segment at 55 to 228 (RLVPSRLDFG…TLKPVIRISF (174 aa)) is papD-L domain. N-linked (GlcNAc...) asparagine glycans are attached at residues N84, N114, N168, N235, N316, N317, N342, N372, N409, N462, N563, N890, and N1013. The helical transmembrane segment at 1050–1070 (AALVVLLASFGLVLVAAVFDA) threads the bilayer. Residues 1071-1567 (KAIMVQQNAY…SQRNNHNHMN (497 aa)) are Cytoplasmic-facing. Residues 1096 to 1130 (RNIVKLQAEEAAAKAESVQQQQKVKNGQLKELRKR) adopt a coiled-coil conformation. Disordered regions lie at residues 1112–1337 (SVQQ…SPDA), 1364–1386 (PTDN…IGDN), and 1502–1567 (PGLE…NHMN). 2 stretches are compositionally biased toward low complexity: residues 1132-1150 (VVNS…SPWS) and 1166-1183 (KTVV…APAA). S1201 and S1258 each carry phosphoserine. A compositionally biased stretch (polar residues) spans 1247–1259 (AKSSPPQQENISP). The span at 1284-1298 (PGRERERERRSKDQK) shows a compositional bias: basic and acidic residues. The segment covering 1319–1331 (KLNFGQTTNSTSP) has biased composition (polar residues). Composition is skewed to polar residues over residues 1507-1519 (SARQ…QEQV) and 1536-1561 (LPTQ…SQRN).

This sequence belongs to the TMEM131 family. In terms of assembly, may interact (via PapD-L domain) with collagen proteins (via C-terminus); the interaction is direct and is involved in assembly and TRAPPIII ER-to-Golgi transport complex-dependent secretion of collagen.

The protein localises to the membrane. Collagen binding transmembrane protein involved in collagen secretion, probably by recruiting the ER-to-Golgi transport complex TRAPPIII. The polypeptide is Transmembrane protein 131 homolog (Drosophila melanogaster (Fruit fly)).